The sequence spans 211 residues: Thiamine-phosphate synthase (211 aa).

4-amino-2-methyl-5-(diphosphooxymethyl)pyrimidine contacts are provided by residues 37 to 41 (QLRIK) and Asn69. Mg(2+) is bound by residues Asp70 and Asp89. Ser108 is a binding site for 4-amino-2-methyl-5-(diphosphooxymethyl)pyrimidine. 134 to 136 (TQT) is a 2-[(2R,5Z)-2-carboxy-4-methylthiazol-5(2H)-ylidene]ethyl phosphate binding site. Lys137 contacts 4-amino-2-methyl-5-(diphosphooxymethyl)pyrimidine. Residues Gly166 and 186–187 (VS) each bind 2-[(2R,5Z)-2-carboxy-4-methylthiazol-5(2H)-ylidene]ethyl phosphate.

Belongs to the thiamine-phosphate synthase family. The cofactor is Mg(2+).

The enzyme catalyses 2-[(2R,5Z)-2-carboxy-4-methylthiazol-5(2H)-ylidene]ethyl phosphate + 4-amino-2-methyl-5-(diphosphooxymethyl)pyrimidine + 2 H(+) = thiamine phosphate + CO2 + diphosphate. It catalyses the reaction 2-(2-carboxy-4-methylthiazol-5-yl)ethyl phosphate + 4-amino-2-methyl-5-(diphosphooxymethyl)pyrimidine + 2 H(+) = thiamine phosphate + CO2 + diphosphate. It carries out the reaction 4-methyl-5-(2-phosphooxyethyl)-thiazole + 4-amino-2-methyl-5-(diphosphooxymethyl)pyrimidine + H(+) = thiamine phosphate + diphosphate. It functions in the pathway cofactor biosynthesis; thiamine diphosphate biosynthesis; thiamine phosphate from 4-amino-2-methyl-5-diphosphomethylpyrimidine and 4-methyl-5-(2-phosphoethyl)-thiazole: step 1/1. In terms of biological role, condenses 4-methyl-5-(beta-hydroxyethyl)thiazole monophosphate (THZ-P) and 2-methyl-4-amino-5-hydroxymethyl pyrimidine pyrophosphate (HMP-PP) to form thiamine monophosphate (TMP). In Salmonella choleraesuis (strain SC-B67), this protein is Thiamine-phosphate synthase.